A 287-amino-acid polypeptide reads, in one-letter code: 4-hydroxybenzoate octaprenyltransferase (287 aa).

A run of 9 helical transmembrane segments spans residues 22–42 (IGTL…AQGF), 45–65 (LGVL…GCVI), 91–111 (TSTE…LLVL), 114–134 (NSLT…YPFM), 139–159 (QLPQ…AFAA), 161–181 (ANAL…WTIA), 212–232 (IIIA…GWLE), 236–256 (WIYF…QLQI), and 267–287 (AFLD…LGYL).

It belongs to the UbiA prenyltransferase family. Mg(2+) serves as cofactor.

The protein resides in the cell inner membrane. It catalyses the reaction all-trans-octaprenyl diphosphate + 4-hydroxybenzoate = 4-hydroxy-3-(all-trans-octaprenyl)benzoate + diphosphate. It participates in cofactor biosynthesis; ubiquinone biosynthesis. In terms of biological role, catalyzes the prenylation of para-hydroxybenzoate (PHB) with an all-trans polyprenyl group. Mediates the second step in the final reaction sequence of ubiquinone-8 (UQ-8) biosynthesis, which is the condensation of the polyisoprenoid side chain with PHB, generating the first membrane-bound Q intermediate 3-octaprenyl-4-hydroxybenzoate. This is 4-hydroxybenzoate octaprenyltransferase from Psychromonas ingrahamii (strain DSM 17664 / CCUG 51855 / 37).